A 337-amino-acid polypeptide reads, in one-letter code: Adenosine deaminase (337 aa).

2 residues coordinate Zn(2+): H12 and H14. Substrate-binding residues include H14, D16, and G170. H197 is a binding site for Zn(2+). E200 (proton donor) is an active-site residue. Residue D278 participates in Zn(2+) binding. A substrate-binding site is contributed by D279.

The protein belongs to the metallo-dependent hydrolases superfamily. Adenosine and AMP deaminases family. Adenosine deaminase subfamily. Zn(2+) is required as a cofactor.

The enzyme catalyses adenosine + H2O + H(+) = inosine + NH4(+). The catalysed reaction is 2'-deoxyadenosine + H2O + H(+) = 2'-deoxyinosine + NH4(+). Functionally, catalyzes the hydrolytic deamination of adenosine and 2-deoxyadenosine. In Pectobacterium atrosepticum (strain SCRI 1043 / ATCC BAA-672) (Erwinia carotovora subsp. atroseptica), this protein is Adenosine deaminase.